Here is a 724-residue protein sequence, read N- to C-terminus: MFDTTPHSGRSTPSSSPSLRKRLQLLPPSRPPPEPEPGTMVEKGSDSSSEKGGVPGTPSTQSLGSRNFIRNSKKMQSWYSMLSPTYKQRNEDFRKLFSKLPEAERLIVDYSCALQREILLQGRLYLSENWICFYSNIFRWETTISIQLKEVTCLKKEKTAKLIPNAIQICTESEKHFFTSFGARDRCFLLIFRLWQNALLEKTLSPRELWHLVHQCYGSELGLTSEDEDYVSPLQLNGLGTPKEVGDVIALSDITSSGAADRSQEPSPVGSRRGHVTPNLSRASSDADHGAEEDKEEQVDSQPDASSSQTVTPVAEPPSTEPTQPDGPTTLGPLDLLPSEELLTDTSNSSSSTGEEADLAALLPDLSGRLLINSVFHVGAERLQQMLFSDSPFLQGFLQQCKFTDVTLSPWSGDSKCHQRRVLTYTIPISNPLGPKSASVVETQTLFRRGPQAGGCVVDSEVLTQGIPYQDYFYTAHRYCILGLARNKARLRVSSEIRYRKQPWSLVKSLIEKNSWSGIEDYFHHLERELAKAEKLSLEEGGKDARGLLSGLRRRKRPLSWRAHGDGPQHPDPDPCARAGIHTSGSLSSRFSEPSVDQGPGAGIPSALVLISIVICVSLIILIALNVLLFYRLWSLERTAHTFESWHSLALAKGKFPQTATEWAEILALQKQFHSVEVHKWRQILRASVELLDEMKFSLEKLHQGITVSDPPFDTQPRPDDSFS.

The segment covering 1–18 (MFDTTPHSGRSTPSSSPS) has biased composition (low complexity). The disordered stretch occupies residues 1 to 66 (MFDTTPHSGR…TPSTQSLGSR (66 aa)). The span at 57 to 66 (TPSTQSLGSR) shows a compositional bias: polar residues. Positions 91–158 (EDFRKLFSKL…KEVTCLKKEK (68 aa)) constitute a GRAM domain. The segment at 256–336 (SSGAADRSQE…GPTTLGPLDL (81 aa)) is disordered. 3 positions are modified to phosphoserine: Ser-263, Ser-267, and Ser-271. Residues 300–312 (DSQPDASSSQTVT) are compositionally biased toward polar residues. Over residues 326–336 (DGPTTLGPLDL) the composition is skewed to low complexity. Positions 367-538 (SGRLLINSVF…ELAKAEKLSL (172 aa)) constitute a VASt domain. Position 415 is a phosphoserine (Ser-415). The tract at residues 560 to 579 (SWRAHGDGPQHPDPDPCARA) is disordered. Over residues 563–575 (AHGDGPQHPDPDP) the composition is skewed to basic and acidic residues. Residues 610-630 (LISIVICVSLIILIALNVLLF) form a helical membrane-spanning segment.

Expressed in liver.

The protein localises to the endoplasmic reticulum membrane. It is found in the cell membrane. Its subcellular location is the cytoplasmic vesicle. The protein resides in the autophagosome. Cholesterol transporter that mediates non-vesicular transport of cholesterol from the plasma membrane (PM) to the endoplasmic reticulum (ER). Contains unique domains for binding cholesterol and the PM, thereby serving as a molecular bridge for the transfer of cholesterol from the PM to the ER. Plays a crucial role in cholesterol homeostasis and has the unique ability to localize to the PM based on the level of membrane cholesterol. In lipid-poor conditions localizes to the ER membrane and in response to excess cholesterol in the PM is recruited to the endoplasmic reticulum-plasma membrane contact sites (EPCS) which is mediated by the GRAM domain. At the EPCS, the sterol-binding VASt/ASTER domain binds to the cholesterol in the PM and facilitates its transfer from the PM to ER. May play a role in tumor progression. Plays a role in autophagy regulation and is required for biogenesis of the autophagosome. This function in autophagy requires its cholesterol-transfer activity. The polypeptide is Protein Aster-A (Homo sapiens (Human)).